The sequence spans 318 residues: HTH-type transcriptional regulatory protein TyrR (318 aa).

The region spanning 15–239 is the Sigma-54 factor interaction; truncated domain; sequence FIVQSEAMKS…LYNTLYRACS (225 aa). ATP contacts are provided by residues 43 to 50 and 101 to 110; these read GETGSGKD and ANKGTVLLDG. The H-T-H motif DNA-binding region spans 292–312; that stretch reads STRKLAQRLGVSHTAIANKLK.

In terms of assembly, homodimer. In presence of tyrosine (or high concentrations of phenylalanine or tryptophan) and ATP, it self-associates to form a hexamer.

It is found in the cytoplasm. Its activity is regulated as follows. The DNA binding ability is drastically reduced in the presence of ATP. Tyrosine further reduces the binding affinity of TyrR in the presence of ATP. Its function is as follows. Transcriptional regulator of the TyrR regulon, which includes a number of genes coding for proteins involved in the biosynthesis or transport of the three aromatic amino acids, phenylalanine, tyrosine and tryptophan. These three aromatic amino acids act as effectors which bind to the TyrR protein to form an active regulatory protein. Acts by binding specifically to TyrR boxes in the promoter region of the target genes. Can efficiently repress the transcription of the aroF promoter, but lacks the ability to function as a transcriptional activator. This is HTH-type transcriptional regulatory protein TyrR from Haemophilus influenzae (strain ATCC 51907 / DSM 11121 / KW20 / Rd).